Consider the following 311-residue polypeptide: Methionyl-tRNA formyltransferase (311 aa).

110–113 (SLLP) lines the (6S)-5,6,7,8-tetrahydrofolate pocket.

It belongs to the Fmt family.

It catalyses the reaction L-methionyl-tRNA(fMet) + (6R)-10-formyltetrahydrofolate = N-formyl-L-methionyl-tRNA(fMet) + (6S)-5,6,7,8-tetrahydrofolate + H(+). Attaches a formyl group to the free amino group of methionyl-tRNA(fMet). The formyl group appears to play a dual role in the initiator identity of N-formylmethionyl-tRNA by promoting its recognition by IF2 and preventing the misappropriation of this tRNA by the elongation apparatus. The protein is Methionyl-tRNA formyltransferase of Streptococcus gordonii (strain Challis / ATCC 35105 / BCRC 15272 / CH1 / DL1 / V288).